A 407-amino-acid chain; its full sequence is Protein phosphatase methylesterase 1 (407 aa).

Residues 1-53 form a disordered region; it reads MSDLQKSFAKSKLAKLPPEPPPIPESVADEDDDSGSSTETVTPSPVKQLFARP. Catalysis depends on residues Ser-185, Asp-211, and His-342. Residues 388–401 show a composition bias toward gly residues; it reads GAGVPLGKAEGGTT. Positions 388-407 are disordered; sequence GAGVPLGKAEGGTTGSFKRS.

The protein belongs to the AB hydrolase superfamily.

The enzyme catalyses [phosphatase 2A protein]-C-terminal L-leucine methyl ester + H2O = [phosphatase 2A protein]-C-terminal L-leucine + methanol + H(+). In terms of biological role, demethylates proteins that have been reversibly carboxymethylated. Demethylates the phosphatase PP2A catalytic subunit. The sequence is that of Protein phosphatase methylesterase 1 (ppe1) from Emericella nidulans (strain FGSC A4 / ATCC 38163 / CBS 112.46 / NRRL 194 / M139) (Aspergillus nidulans).